Consider the following 437-residue polypeptide: Probable E3 ubiquitin-protein ligase TRIML2 (437 aa).

The B box-type zinc finger occupies 14–55 (TEDAYCETHLEPTRLFCDVDQITLCSKCFQSQEHKHHMVCGI). Zn(2+) contacts are provided by Cys19, His22, Cys41, and His47. The stretch at 55-200 (IQEAAENYRK…IVELEKKCGE (146 aa)) forms a coiled coil. Residues 231–429 (DLSLCHIRGL…DSLTILQHGP (199 aa)) enclose the B30.2/SPRY domain.

The enzyme catalyses S-ubiquitinyl-[E2 ubiquitin-conjugating enzyme]-L-cysteine + [acceptor protein]-L-lysine = [E2 ubiquitin-conjugating enzyme]-L-cysteine + N(6)-ubiquitinyl-[acceptor protein]-L-lysine.. It functions in the pathway protein modification; protein ubiquitination. The chain is Probable E3 ubiquitin-protein ligase TRIML2 from Homo sapiens (Human).